Here is a 68-residue protein sequence, read N- to C-terminus: MESEQIQVNCPTCGKVVIWGEQSPFRPFCCKRCQLIDLGEWADEEKRIPSDTELSDSDEWSEEDPLKH.

Zn(2+) contacts are provided by Cys10, Cys13, Cys29, and Cys33. Residues 45-68 (EKRIPSDTELSDSDEWSEEDPLKH) are disordered. Residues 53–68 (ELSDSDEWSEEDPLKH) show a composition bias toward acidic residues.

It belongs to the DNA gyrase inhibitor YacG family. As to quaternary structure, interacts with GyrB. The cofactor is Zn(2+).

Functionally, inhibits all the catalytic activities of DNA gyrase by preventing its interaction with DNA. Acts by binding directly to the C-terminal domain of GyrB, which probably disrupts DNA binding by the gyrase. This is DNA gyrase inhibitor YacG from Yersinia pseudotuberculosis serotype O:1b (strain IP 31758).